The sequence spans 308 residues: Cysteine proteinase 3 (308 aa).

A signal peptide spans 1 to 13 (MFALILFVSLACA). Positions 14 to 92 (NEVAFKQWAA…TSNVKAAVKA (79 aa)) are cleaved as a propeptide — activation peptide. 2 disulfides stabilise this stretch: Cys112-Cys153 and Cys146-Cys186. Cys115 is an active-site residue. Catalysis depends on residues His251 and Asn271.

This sequence belongs to the peptidase C1 family.

Its subcellular location is the cytoplasm. The protein resides in the cytoplasmic vesicle. It localises to the phagosome. The catalysed reaction is Hydrolysis of proteins, including basement membrane collagen and azocasein. Preferential cleavage: Arg-Arg-|-Xaa in small molecule substrates including Z-Arg-Arg-|-NHMec.. Its function is as follows. Cysteine protease which may be involved in pathogenicity. The sequence is that of Cysteine proteinase 3 from Entamoeba histolytica (strain ATCC 30459 / HM-1:IMSS / ABRM).